A 271-amino-acid chain; its full sequence is Imidazole glycerol phosphate synthase subunit HisF (271 aa).

Catalysis depends on residues D12 and D136.

This sequence belongs to the HisA/HisF family. As to quaternary structure, heterodimer of HisH and HisF.

The protein resides in the cytoplasm. The enzyme catalyses 5-[(5-phospho-1-deoxy-D-ribulos-1-ylimino)methylamino]-1-(5-phospho-beta-D-ribosyl)imidazole-4-carboxamide + L-glutamine = D-erythro-1-(imidazol-4-yl)glycerol 3-phosphate + 5-amino-1-(5-phospho-beta-D-ribosyl)imidazole-4-carboxamide + L-glutamate + H(+). The protein operates within amino-acid biosynthesis; L-histidine biosynthesis; L-histidine from 5-phospho-alpha-D-ribose 1-diphosphate: step 5/9. In terms of biological role, IGPS catalyzes the conversion of PRFAR and glutamine to IGP, AICAR and glutamate. The HisF subunit catalyzes the cyclization activity that produces IGP and AICAR from PRFAR using the ammonia provided by the HisH subunit. In Haloarcula marismortui (strain ATCC 43049 / DSM 3752 / JCM 8966 / VKM B-1809) (Halobacterium marismortui), this protein is Imidazole glycerol phosphate synthase subunit HisF.